A 341-amino-acid polypeptide reads, in one-letter code: L-threonine 3-dehydrogenase (341 aa).

Residue C38 coordinates Zn(2+). Residues T40 and H43 each act as charge relay system in the active site. Residues H63, E64, C93, C96, C99, and C107 each contribute to the Zn(2+) site. Residues I175, D195, R200, 262 to 264, and 286 to 287 contribute to the NAD(+) site; these read LGI and IY.

It belongs to the zinc-containing alcohol dehydrogenase family. In terms of assembly, homotetramer. The cofactor is Zn(2+).

It localises to the cytoplasm. It catalyses the reaction L-threonine + NAD(+) = (2S)-2-amino-3-oxobutanoate + NADH + H(+). Its pathway is amino-acid degradation; L-threonine degradation via oxydo-reductase pathway; glycine from L-threonine: step 1/2. In terms of biological role, catalyzes the NAD(+)-dependent oxidation of L-threonine to 2-amino-3-ketobutyrate. This Klebsiella pneumoniae subsp. pneumoniae (strain ATCC 700721 / MGH 78578) protein is L-threonine 3-dehydrogenase.